A 777-amino-acid chain; its full sequence is 1,4-alpha-glucan branching enzyme GlgB (777 aa).

The active-site Nucleophile is Asp-408. Catalysis depends on Glu-461, which acts as the Proton donor.

This sequence belongs to the glycosyl hydrolase 13 family. GlgB subfamily. Monomer.

It carries out the reaction Transfers a segment of a (1-&gt;4)-alpha-D-glucan chain to a primary hydroxy group in a similar glucan chain.. Its pathway is glycan biosynthesis; glycogen biosynthesis. Its function is as follows. Catalyzes the formation of the alpha-1,6-glucosidic linkages in glycogen by scission of a 1,4-alpha-linked oligosaccharide from growing alpha-1,4-glucan chains and the subsequent attachment of the oligosaccharide to the alpha-1,6 position. This is 1,4-alpha-glucan branching enzyme GlgB from Actinobacillus pleuropneumoniae serotype 5b (strain L20).